The primary structure comprises 452 residues: Chromosomal replication initiator protein DnaA (452 aa).

The segment at methionine 1–alanine 85 is domain I, interacts with DnaA modulators. The segment at alanine 85–serine 115 is domain II. The domain III, AAA+ region stretch occupies residues histidine 116–alanine 332. The ATP site is built by glycine 160, glycine 162, lysine 163, and threonine 164. The tract at residues histidine 333 to serine 452 is domain IV, binds dsDNA.

Belongs to the DnaA family. In terms of assembly, oligomerizes as a right-handed, spiral filament on DNA at oriC.

The protein resides in the cytoplasm. Plays an essential role in the initiation and regulation of chromosomal replication. ATP-DnaA binds to the origin of replication (oriC) to initiate formation of the DNA replication initiation complex once per cell cycle. Binds the DnaA box (a 9 base pair repeat at the origin) and separates the double-stranded (ds)DNA. Forms a right-handed helical filament on oriC DNA; dsDNA binds to the exterior of the filament while single-stranded (ss)DNA is stabiized in the filament's interior. The ATP-DnaA-oriC complex binds and stabilizes one strand of the AT-rich DNA unwinding element (DUE), permitting loading of DNA polymerase. After initiation quickly degrades to an ADP-DnaA complex that is not apt for DNA replication. Binds acidic phospholipids. This is Chromosomal replication initiator protein DnaA from Legionella pneumophila (strain Paris).